Reading from the N-terminus, the 98-residue chain is Aspartyl/glutamyl-tRNA(Asn/Gln) amidotransferase subunit C (98 aa).

This sequence belongs to the GatC family. In terms of assembly, heterotrimer of A, B and C subunits.

It catalyses the reaction L-glutamyl-tRNA(Gln) + L-glutamine + ATP + H2O = L-glutaminyl-tRNA(Gln) + L-glutamate + ADP + phosphate + H(+). The catalysed reaction is L-aspartyl-tRNA(Asn) + L-glutamine + ATP + H2O = L-asparaginyl-tRNA(Asn) + L-glutamate + ADP + phosphate + 2 H(+). Functionally, allows the formation of correctly charged Asn-tRNA(Asn) or Gln-tRNA(Gln) through the transamidation of misacylated Asp-tRNA(Asn) or Glu-tRNA(Gln) in organisms which lack either or both of asparaginyl-tRNA or glutaminyl-tRNA synthetases. The reaction takes place in the presence of glutamine and ATP through an activated phospho-Asp-tRNA(Asn) or phospho-Glu-tRNA(Gln). This Beutenbergia cavernae (strain ATCC BAA-8 / DSM 12333 / CCUG 43141 / JCM 11478 / NBRC 16432 / NCIMB 13614 / HKI 0122) protein is Aspartyl/glutamyl-tRNA(Asn/Gln) amidotransferase subunit C.